The following is an 825-amino-acid chain: MTEGIRARGPRSSSVNSVPLILDIEDFKGDFSFDALFGNLVNDLLPSFLDEEADSGDGHGNIAGVDGLTNGHLRGQSAPLSSAPFFPEVDGLLSLFKDACKELVDLRKQVDGRLNTLKKEVSTQDSKHRKTLTEIEKGVDGLFESFARLDGRISSVGQTAAKIGDHLQSADAQRETASQTIDLIKYLMEFNGSPGDLMELSALFSDDSRVAEAASIAQKLRSFAEEDIGRQGASAAAGNATPGRGLEVAVANLQDYCNELENRLLSRFDAASQRRDLSTMSECAKILSQFNRGTSAMQHYVATRPMFIDVEVMNSDIRLVLGDHGSQPSPSNVARGLSALFKEITDTVRKEAATITAVFPTPNEVMAILVQRVLEQRVTGILDKILAKPSLMSPPPVQEGGLLLYLRMLAVAYERTQELAKDLRAVGCGDLDVEDLTESLFSSHKDEYPEHERASLKQLYQAKMEELRAESQQVSESSGTIGRSKGASISSSLQQISVTVVTDFVRWNEEAITRCTLFSSQPATLAANVKAIFTCLLDQVSVYITEGLERARDSLSEAAALRERFVLGRRVAAAAASAAEAAAAAGESSFKSFMVAVQRCGSSVAIVQQYFANSISRLLLPVDGAHAASCEEMSTALSKAEAAAYKGLQQCIETVMAEVDRLLSSEQKSTDYRSTDDGIASDHRPTNACIRVVAYLSRVLESAFTALEGLNKQAFLTELGNRLEKLLLTHWQKFTFNPSGGLRLKRDLNEYVGFVKSFGAPSVDEKFELLGIIANVFIVAPDSLPTLFEGSPSIRKDAQRFIQLREDYKSAKLATKLSSLWPSLS.

Residues 244–266 (RGLEVAVANLQDYCNELENRLLS) are a coiled coil.

The protein belongs to the SEC10 family. In terms of assembly, the exocyst complex is composed of SEC3, SEC5, SEC6, SEC8, SEC10, EXO70A1 and EXO84B. Interacts with EXO84B. Binds to EXO70E2. Binds directly to B1L. In terms of tissue distribution, expressed in seedlings, roots, leaves and flowers.

It is found in the cytoplasm. The protein localises to the cytosol. The protein resides in the secreted. It localises to the extracellular exosome. In terms of biological role, component of the exocyst complex involved in the docking of exocytic vesicles with fusion sites on the plasma membrane during regulated or polarized secretion. Involved in polarized cell growth and organ morphogenesis. During cytokinesis, involved in cell plate initiation, cell plate maturation and formation of new primary cell wall. The polypeptide is Exocyst complex component SEC10a (Arabidopsis thaliana (Mouse-ear cress)).